The chain runs to 479 residues: 5-hydroxytryptamine receptor 2B (479 aa).

The Extracellular segment spans residues M1 to W55. A helical transmembrane segment spans residues A56–V78. At S79–N89 the chain is on the cytoplasmic side. A helical membrane pass occupies residues Y90–L112. The Extracellular segment spans residues T113–P128. The cysteines at positions 127 and 206 are disulfide-linked. Residues A129–L150 traverse the membrane as a helical segment. Ergotamine is bound by residues D134 and T139. The DRY motif; important for ligand-induced conformation changes signature appears at D151–Y153. The Cytoplasmic segment spans residues D151 to T170. The chain crosses the membrane as a helical span at residues A171 to I191. Residues K192–S215 lie on the Extracellular side of the membrane. An N-linked (GlcNAc...) asparagine glycan is attached at N203. L208 contacts ergotamine. The [DE]RFG motif; may stabilize a conformation that preferentially activates signaling via beta-arrestin family members motif lies at D211–G214. The helical transmembrane segment at F216 to L238 threads the bilayer. Topologically, residues T239–K323 are cytoplasmic. A helical membrane pass occupies residues V324–V344. At T345 to T359 the chain is on the extracellular side. C349 and C352 form a disulfide bridge. N353 carries N-linked (GlcNAc...) asparagine glycosylation. The helical transmembrane segment at L360–L381 threads the bilayer. Residues N375–Y379 carry the NPxxY motif; important for ligand-induced conformation changes and signaling motif. The Cytoplasmic portion of the chain corresponds to F382–I479. C396 carries S-palmitoyl cysteine lipidation. Residues S477–I479 carry the PDZ-binding motif.

The protein belongs to the G-protein coupled receptor 1 family. As to quaternary structure, interacts (via C-terminus) with MPDZ. In terms of tissue distribution, stomach fundus.

Its subcellular location is the cell membrane. It is found in the synapse. The protein localises to the synaptosome. G-protein coupled receptor for 5-hydroxytryptamine (serotonin). Also functions as a receptor for various ergot alkaloid derivatives and psychoactive substances. Ligand binding causes a conformation change that triggers signaling via guanine nucleotide-binding proteins (G proteins) and modulates the activity of downstream effectors. HTR2B is coupled to G(q)/G(11) G alpha proteins and activates phospholipase C-beta, releasing diacylglycerol (DAG) and inositol 1,4,5-trisphosphate (IP3) second messengers that modulate the activity of phosphatidylinositol 3-kinase and promote the release of Ca(2+) ions from intracellular stores, respectively. Beta-arrestin family members inhibit signaling via G proteins and mediate activation of alternative signaling pathways. Plays a role in the regulation of dopamine and 5-hydroxytryptamine release, 5-hydroxytryptamine uptake and in the regulation of extracellular dopamine and 5-hydroxytryptamine levels, and thereby affects neural activity. May play a role in the perception of pain. Plays a role in the regulation of behavior, including impulsive behavior. Required for normal proliferation of embryonic cardiac myocytes and normal heart development. Protects cardiomyocytes against apoptosis. Plays a role in the adaptation of pulmonary arteries to chronic hypoxia. Plays a role in vasoconstriction. Required for normal osteoblast function and proliferation, and for maintaining normal bone density. Required for normal proliferation of the interstitial cells of Cajal in the intestine. The sequence is that of 5-hydroxytryptamine receptor 2B (Htr2b) from Rattus norvegicus (Rat).